The chain runs to 355 residues: 3-dehydroquinate synthase (355 aa).

Residues 71 to 76 (EGEASK), 105 to 109 (GVVGD), 129 to 130 (TS), Lys-142, and Lys-151 contribute to the NAD(+) site. Zn(2+) is bound by residues Glu-184, His-246, and His-263.

It belongs to the sugar phosphate cyclases superfamily. Dehydroquinate synthase family. Requires Co(2+) as cofactor. The cofactor is Zn(2+). NAD(+) serves as cofactor.

It is found in the cytoplasm. The catalysed reaction is 7-phospho-2-dehydro-3-deoxy-D-arabino-heptonate = 3-dehydroquinate + phosphate. Its pathway is metabolic intermediate biosynthesis; chorismate biosynthesis; chorismate from D-erythrose 4-phosphate and phosphoenolpyruvate: step 2/7. Catalyzes the conversion of 3-deoxy-D-arabino-heptulosonate 7-phosphate (DAHP) to dehydroquinate (DHQ). The sequence is that of 3-dehydroquinate synthase from Streptococcus thermophilus (strain CNRZ 1066).